A 430-amino-acid polypeptide reads, in one-letter code: Histidine--tRNA ligase (430 aa).

The protein belongs to the class-II aminoacyl-tRNA synthetase family. Homodimer.

Its subcellular location is the cytoplasm. It catalyses the reaction tRNA(His) + L-histidine + ATP = L-histidyl-tRNA(His) + AMP + diphosphate + H(+). This Lactococcus lactis subsp. cremoris (strain SK11) protein is Histidine--tRNA ligase.